The following is a 1700-amino-acid chain: Rho guanine nucleotide exchange factor 28 (1700 aa).

A disordered region spans residues 288-335 (TERATMPSGAAETEEEVRNLESGRSPSEEEEDGQLVKSQADGPSEQED). Residues serine 312, serine 314, and serine 478 each carry the phosphoserine modification. A disordered region spans residues 483–525 (VADSEEEGRSEPPICYAVGSQSSPRTGLPGGDELDSFDANTEP). Phosphoserine is present on serine 623. Residues 651-698 (RHQFVPGTFSGVLQCSGCDKTLLGKESLQCANCKANTHKGCKDTVPPC) form a Phorbol-ester/DAG-type zinc finger. Positions 709–720 (NKPQTILGSSSV) are enriched in polar residues. Disordered regions lie at residues 709 to 761 (NKPQ…VPGT) and 774 to 799 (ESEGDSNSWRSRSHSDELFQSMGSSP). A compositionally biased stretch (low complexity) spans 728–737 (LSLHPSPSMP). The span at 774 to 783 (ESEGDSNSWR) shows a compositional bias: polar residues. Residues 848 to 1043 (KRQDVIFELM…KDMIAAVDLK (196 aa)) enclose the DH domain. The 103-residue stretch at 1085–1187 (ALLHDGLVYW…WMRRIQQAVE (103 aa)) folds into the PH domain. The tract at residues 1186–1207 (VESCPEEEGGRTSESDEERRKA) is disordered. Residues 1193-1207 (EGGRTSESDEERRKA) are compositionally biased toward basic and acidic residues. Residues 1294–1303 (DVSQPSEEGP) form an interaction with PTK2/FAK1; required for regulation of axonal branching and synapse formation region. The mediates cytoplasmic retention and interaction with YWHAH stretch occupies residues 1369-1380 (IIQAIQNLTRLL). The tract at residues 1421-1700 (QEKSRYLEKH…DGAEENIVYL (280 aa)) is interaction with microtubules. A coiled-coil region spans residues 1473–1522 (ERECQSQEELLLRHRSELDHQLQEYQQNLERLREGQRMVERERQRMRDQQ). Residues 1493-1524 (QLQEYQQNLERLREGQRMVERERQRMRDQQGL) form an RNA-binding region. At serine 1535 the chain carries Phosphoserine. Residues 1563-1576 (FLNDAFTHMSLNTS) are mediates cytoplasmic retention and interaction with MAPK8IP1. Positions 1574–1598 (NTSNKPNPSGAPWDAHPPGGSHLDL) are disordered. Serine 1604 is subject to Phosphoserine. Positions 1612–1700 (VSQPSDVNSE…DGAEENIVYL (89 aa)) are disordered. Residues 1613–1623 (SQPSDVNSELW) show a composition bias toward polar residues. Residues 1633–1642 (ARQESIKDSC) show a composition bias toward basic and acidic residues. A compositionally biased stretch (polar residues) spans 1647 to 1672 (DLNSFQTESPDPQDSNQRGPQPQTLI).

As to quaternary structure, homooligomer; forms cytoplasmic aggregates. Forms a complex with MAPK8 and MAPK8IP1. Interacts with RHOA. Interacts with microtubules. Interacts with YWHAE and YWHAH. Interacts with PTK2/FAK1. Interacts with NEFL. Interacts with CTNND2; prevents interaction with RHOA. Post-translationally, phosphorylated on tyrosine upon stimulation of cells by laminin.

The protein resides in the cytoplasm. Its subcellular location is the cell membrane. Its function is as follows. Functions as a RHOA-specific guanine nucleotide exchange factor regulating signaling pathways downstream of integrins and growth factor receptors. Functions in axonal branching, synapse formation and dendritic morphogenesis. Also functions in focal adhesion formation, cell motility and B-lymphocytes activation. May regulate NEFL expression and aggregation and play a role in apoptosis. This Rattus norvegicus (Rat) protein is Rho guanine nucleotide exchange factor 28 (Arhgef28).